The primary structure comprises 339 residues: Methionyl-tRNA formyltransferase (339 aa).

Position 110-113 (110-113 (SLLP)) interacts with (6S)-5,6,7,8-tetrahydrofolate.

The protein belongs to the Fmt family.

It catalyses the reaction L-methionyl-tRNA(fMet) + (6R)-10-formyltetrahydrofolate = N-formyl-L-methionyl-tRNA(fMet) + (6S)-5,6,7,8-tetrahydrofolate + H(+). Functionally, attaches a formyl group to the free amino group of methionyl-tRNA(fMet). The formyl group appears to play a dual role in the initiator identity of N-formylmethionyl-tRNA by promoting its recognition by IF2 and preventing the misappropriation of this tRNA by the elongation apparatus. The chain is Methionyl-tRNA formyltransferase from Prochlorococcus marinus (strain MIT 9211).